A 289-amino-acid polypeptide reads, in one-letter code: Glycine--tRNA ligase alpha subunit (289 aa).

Belongs to the class-II aminoacyl-tRNA synthetase family. In terms of assembly, tetramer of two alpha and two beta subunits.

Its subcellular location is the cytoplasm. It catalyses the reaction tRNA(Gly) + glycine + ATP = glycyl-tRNA(Gly) + AMP + diphosphate. In Rickettsia bellii (strain OSU 85-389), this protein is Glycine--tRNA ligase alpha subunit.